The chain runs to 494 residues: uncharacterized protein (494 aa).

2 VOC domains span residues 18-174 and 229-408; these read FIDC…FINR and SLDH…FGIL. 3 residues coordinate Fe cation: H232, H349, and E460.

It belongs to the 4HPPD family. Fe cation serves as cofactor.

In terms of biological role, may have dioxygenase activity. This is an uncharacterized protein from Dictyostelium discoideum (Social amoeba).